A 641-amino-acid polypeptide reads, in one-letter code: SUMO-activating enzyme subunit 2 (641 aa).

ATP-binding positions include 24–29, aspartate 48, 56–59, lysine 72, 95–96, and 117–122; these read GAGGIG, NLNR, SI, and DNNAAR. 2 residues coordinate Zn(2+): cysteine 158 and cysteine 161. Cysteine 173 serves as the catalytic Glycyl thioester intermediate. A Glycyl lysine isopeptide (Lys-Gly) (interchain with G-Cter in SUMO) cross-link involves residue lysine 190. Residue lysine 236 forms a Glycyl lysine isopeptide (Lys-Gly) (interchain with G-Cter in SUMO1) linkage. Residues lysine 257 and lysine 275 each participate in a glycyl lysine isopeptide (Lys-Gly) (interchain with G-Cter in SUMO) cross-link. Zn(2+)-binding residues include cysteine 439 and cysteine 442. Residues 546–641 form a disordered region; that stretch reads GDVPEKGPQK…EEDDDIIALD (96 aa). The segment covering 556-579 has biased composition (polar residues); sequence PSEQSVKNITNGSDDGAQPSTSKA. Residues 582-594 show a composition bias toward acidic residues; the sequence is QDDVLIVDSDEES. Residues lysine 610, lysine 612, and lysine 623 each participate in a glycyl lysine isopeptide (Lys-Gly) (interchain with G-Cter in SUMO) cross-link. Residues 630-641 are compositionally biased toward acidic residues; that stretch reads PVEEDDDIIALD.

The protein belongs to the ubiquitin-activating E1 family. Heterodimer of sae1 and uba2/sae2. The heterodimer corresponds to the two domains that are encoded on a single polypeptide chain in ubiquitin-activating enzyme E1. Interacts with ube2i. Sumoylated with SUMO1 and SUMO2/3 and by UBC9. Sumoylation at Lys-236 inhibits enzymatic activity. Sumoylation at the C-terminal lysine cluster plays an essential role in nuclear trafficking.

Its subcellular location is the cytoplasm. It localises to the nucleus. Its pathway is protein modification; protein sumoylation. In terms of biological role, the heterodimer acts as an E1 ligase for sumo1, sumo2, and sumo3. It mediates ATP-dependent activation of sumo proteins followed by formation of a thioester bond between a sumo protein and a conserved active site cysteine residue on uba2/sae2. The chain is SUMO-activating enzyme subunit 2 (uba2) from Xenopus tropicalis (Western clawed frog).